The chain runs to 164 residues: Inner membrane assembly complex subunit 17 (164 aa).

The transit peptide at 1–28 (MIKTAKISTLRLAITRNARNLSFTTLVR) directs the protein to the mitochondrion. Topologically, residues 29–97 (SPEVDNSKIK…NEVPLKRFTR (69 aa)) are mitochondrial matrix. The helical transmembrane segment at 98–118 (PLWIFILMASTFYLGAHLVWW) threads the bilayer. The Mitochondrial intermembrane portion of the chain corresponds to 119-164 (KLAYEKKEVELKHKVDSLETTLKDVMKEKATGPTPCNNKKSWYKFW). A coiled-coil region spans residues 121–149 (AYEKKEVELKHKVDSLETTLKDVMKEKAT).

This sequence belongs to the INA17 family. In terms of assembly, component of the inner membrane assembly (INA) complex, composed of INA17 and INA22. Interacts with a subset of F(1)F(0)-ATP synthase subunits of the F(1)-domain and the peripheral stalk.

It localises to the mitochondrion inner membrane. Component of the INA complex (INAC) that promotes the biogenesis of mitochondrial F(1)F(0)-ATP synthase. INAC facilitates the assembly of the peripheral stalk and promotes the assembly of the catalytic F(1)-domain with the membrane-embedded F(0)-domain. In Candida glabrata (strain ATCC 2001 / BCRC 20586 / JCM 3761 / NBRC 0622 / NRRL Y-65 / CBS 138) (Yeast), this protein is Inner membrane assembly complex subunit 17.